Consider the following 1050-residue polypeptide: DNA ligase 4 (1050 aa).

Residues 1-22 (MNTNRRSRSPDEEALEEDQHQY) are disordered. Residues Glu-329, Lys-331, Leu-332, Arg-336, Glu-398, Phe-438, Glu-498, Lys-503, Lys-520, and Lys-522 each coordinate ATP. Lys-331 serves as the catalytic N6-AMP-lysine intermediate. Mg(2+) is bound at residue Glu-398. Residue Glu-498 participates in Mg(2+) binding. Residues 691 to 702 (QEQERKKMEMEN) are compositionally biased toward basic and acidic residues. Residues 691 to 711 (QEQERKKMEMENRKRKPATKR) form a disordered region. BRCT domains lie at 742–840 (ASKR…KENK) and 936–1049 (LRSF…EYVA).

The protein belongs to the ATP-dependent DNA ligase family. Mg(2+) is required as a cofactor.

The protein resides in the nucleus. The enzyme catalyses ATP + (deoxyribonucleotide)n-3'-hydroxyl + 5'-phospho-(deoxyribonucleotide)m = (deoxyribonucleotide)n+m + AMP + diphosphate.. Its function is as follows. DNA ligase involved in DNA non-homologous end joining (NHEJ); required for double-strand break (DSB) repair. The chain is DNA ligase 4 (mus-53) from Neurospora crassa (strain ATCC 24698 / 74-OR23-1A / CBS 708.71 / DSM 1257 / FGSC 987).